Here is a 130-residue protein sequence, read N- to C-terminus: MCHTSCSSGCQPSCCVSSSCQPSCCVSSPCQASCFVSSPCQPSCCVSSSCQSACCRPAICIPVRYQVACCVPVSCGPTVCMAPSCQSSVCVPVSCRPVCVTSSCQSSGCCQPSCPTLVCKPVTCSNPSCC.

14 tandem repeats follow at residues 10–14 (CQPSC), 15–29 (CVSS…VSSP), 34–38 (CFVSS), 40–44 (CQPSC), 45–49 (CVSSS), 60–64 (CIPVR), 85–89 (CQSSV), 90–94 (CVPVS), 95–99 (CRPVC), 104–108 (CQSSG), 109–113 (CCQPS), 114–118 (CPTLV), 119–123 (CKPVT), and 124–128 (CSNPS). A 14 X 5 AA approximate repeats region spans residues 10-128 (CQPSCCVSSS…CKPVTCSNPS (119 aa)).

This sequence belongs to the KRTAP type 12 family. As to quaternary structure, interacts with hair keratins. In terms of tissue distribution, expressed only in the head and back skin of a 3 day old mouse. Not expressed in adult skin.

In the hair cortex, hair keratin intermediate filaments are embedded in an interfilamentous matrix, consisting of hair keratin-associated proteins (KRTAP), which are essential for the formation of a rigid and resistant hair shaft through their extensive disulfide bond cross-linking with abundant cysteine residues of hair keratins. The matrix proteins include the high-sulfur and high-glycine-tyrosine keratins. The sequence is that of Keratin-associated protein 12-1 from Mus musculus (Mouse).